Reading from the N-terminus, the 956-residue chain is DNA replication helicase (956 aa).

Residue 120–127 (GTAGAGKT) participates in ATP binding. The disordered stretch occupies residues 658–694 (PINNHVDADSSQGGQSVPVSQRMEHGQEETHDIPCLS). The span at 667–678 (SSQGGQSVPVSQ) shows a compositional bias: low complexity. The span at 679–694 (RMEHGQEETHDIPCLS) shows a compositional bias: basic and acidic residues.

It belongs to the herpesviridae helicase family. As to quaternary structure, associates with the primase and the primase-associated factor to form the helicase-primase complex.

The protein localises to the host nucleus. In terms of biological role, component of the helicase/primase complex. Unwinds the DNA at the replication forks and generates single-stranded DNA for both leading and lagging strand synthesis. The primase synthesizes short RNA primers on the lagging strand that the polymerase elongates using dNTPs. Possesses helicase-like motifs and therefore may act as the helicase subunit of the complex. The sequence is that of DNA replication helicase from Human cytomegalovirus (strain Merlin) (HHV-5).